We begin with the raw amino-acid sequence, 553 residues long: Effector protein HopAB2 (553 aa).

Disordered stretches follow at residues 1 to 123, 198 to 227, and 239 to 275; these read MAGI…APRR, AVHQ…GSSQ, and APNQ…AAMR. The tract at residues 1 to 308 is host recognition; Pto interaction; it reads MAGINRAGPS…LRTALERHVM (308 aa). The span at 24–39 shows a compositional bias: low complexity; sequence SGQAHGSGSGASSSNS. The segment covering 47–60 has biased composition (pro residues); that stretch reads SNTPPSNAPAPPPT. Positions 217 to 227 are enriched in low complexity; it reads SPAASSSGSSQ. Positions 242–255 are enriched in polar residues; that stretch reads QGRSSNTAASQTPV. The E3 ubiquitin-protein ligase stretch occupies residues 309–553; the sequence is QRLPIPLDIG…IAKYAFRIVP (245 aa). The Interaction with Pto-kinase signature appears at 325–328; sequence GINP. The tract at residues 361–380 is disordered; that stretch reads APRPAVPVAPATASRRPDGT. The tract at residues 512-529 is required for E3 ubiquitin-protein ligase and anti-PCD activities and pathogenesis; the sequence is KDLAFMDMKKLAQFLAGK.

The protein belongs to the HopAB family. Interacts physically with plant cell Pto. In terms of processing, auto-ubiquitinated.

It is found in the secreted. Its function is as follows. Effector protein involved in gene-for-gene resistance in tomato plants. It is recognized by the host Pto resistance protein and elicits Pto and Prf-dependent hypersensitive response (HR) and programmed cell death (PCD), resulting in host immunity. In susceptible plants, acts as a virulence factor by suppressing PCD and HR-based plant immunity. This function requires its E3 ubiquitin ligase activity probably by recruiting E2 enzymes and transferring ubiquitin molecules to cellular proteins involved in regulation of PCD and targeting them for degradation. Also, induces expression of host genes involved in ethylene biosynthesis and signaling, in particular ACO1 and ACO2, encoding the ethylene-forming enzyme ACC oxidase. In Pseudomonas syringae pv. tomato (strain ATCC BAA-871 / DC3000), this protein is Effector protein HopAB2 (hopAB2).